A 357-amino-acid polypeptide reads, in one-letter code: Protein RecA (357 aa).

An ATP-binding site is contributed by 67–74 (GPESSGKT).

The protein belongs to the RecA family.

Its subcellular location is the cytoplasm. In terms of biological role, can catalyze the hydrolysis of ATP in the presence of single-stranded DNA, the ATP-dependent uptake of single-stranded DNA by duplex DNA, and the ATP-dependent hybridization of homologous single-stranded DNAs. It interacts with LexA causing its activation and leading to its autocatalytic cleavage. This chain is Protein RecA, found in Leifsonia xyli subsp. xyli (strain CTCB07).